A 1123-amino-acid polypeptide reads, in one-letter code: RNA-binding protein 6 (1123 aa).

Disordered regions lie at residues 1–391 and 413–454; these read MWGD…EGGL and LPGS…EEKP. Ser-17 is modified (phosphoserine). Lys-36 participates in a covalent cross-link: Glycyl lysine isopeptide (Lys-Gly) (interchain with G-Cter in SUMO2). Over residues 79–97 the composition is skewed to basic and acidic residues; it reads DGPHGDYRGGEGPGHDFRG. Low complexity predominate over residues 98–114; it reads GDFSSSDFQSRDSSQLD. 2 stretches are compositionally biased toward basic and acidic residues: residues 115–131 and 145–237; these read FRGRDIHSGDFRDREGP and YRGR…DFRG. A Phosphoserine modification is found at Ser-240. 2 stretches are compositionally biased toward basic and acidic residues: residues 245-286 and 301-323; these read LDFR…REMP and QDREHSGMNVNRREESTHDHTIE. Residue Lys-331 forms a Glycyl lysine isopeptide (Lys-Gly) (interchain with G-Cter in SUMO2) linkage. Residues 332–354 show a composition bias toward basic and acidic residues; it reads GEFEHSETREGETQGVAFEHESP. Position 344 is a phosphothreonine (Thr-344). Residues 356 to 365 show a composition bias toward polar residues; that stretch reads DFQNSQSPVQ. Ser-360 and Ser-362 each carry phosphoserine. 2 stretches are compositionally biased toward basic and acidic residues: residues 366–391 and 431–454; these read DQDKSQLSGREEQSSDAGLFKEEGGL and KTARDAQRDLQDQDYRTGPSEEKP. Glycyl lysine isopeptide (Lys-Gly) (interchain with G-Cter in SUMO2) cross-links involve residues Lys-386, Lys-453, Lys-469, and Lys-569. One can recognise an RRM domain in the interval 456–536; sequence RLIRLSGVPE…KEVTLEYVSS (81 aa). Disordered regions lie at residues 574 to 654, 741 to 787, and 827 to 948; these read TYPQ…QDGE, KRRN…QSSS, and EEEI…EEDK. 2 stretches are compositionally biased toward basic and acidic residues: residues 597–654 and 742–754; these read PADK…QDGE and RRNDSGDHSDHMH. Polar residues predominate over residues 772 to 787; it reads SDWSSDTNRQGQQSSS. Basic and acidic residues predominate over residues 843-860; that stretch reads SKKEMSKRDGKEKKDRGV. Residues Lys-871, Lys-879, and Lys-887 each participate in a glycyl lysine isopeptide (Lys-Gly) (interchain with G-Cter in SUMO2) cross-link. Ser-891 is modified (phosphoserine). Residues 910-922 are compositionally biased toward acidic residues; it reads GDSDYEEEEEEEQ. Basic and acidic residues predominate over residues 934-948; sequence QKREEQTKKENEEDK. Glycyl lysine isopeptide (Lys-Gly) (interchain with G-Cter in SUMO2) cross-links involve residues Lys-935, Lys-948, Lys-991, and Lys-1019. A compositionally biased stretch (basic and acidic residues) spans 1004–1051; sequence EREGKFKGRGNDRREKLQSFDSPERKRIKYSRETDSDRKLVDKEDIDT. The interval 1004–1106 is disordered; sequence EREGKFKGRG…RTSKRQSNET (103 aa). 2 positions are modified to phosphoserine: Ser-1022 and Ser-1025. Glycyl lysine isopeptide (Lys-Gly) (interchain with G-Cter in SUMO2) cross-links involve residues Lys-1042, Lys-1046, and Lys-1066. The G-patch domain maps to 1051-1097; sequence TSSKGGCVQQATGWRKGTGLGYGHPGLASSEEAEGRMRGPSVGASGR.

In terms of assembly, may interact with FAM168B. As to expression, ubiquitous in adults.

The protein resides in the nucleus. Its function is as follows. Specifically binds poly(G) RNA homopolymers in vitro. In Homo sapiens (Human), this protein is RNA-binding protein 6 (RBM6).